Consider the following 447-residue polypeptide: UPF0210 protein LCK_00974 (447 aa).

This sequence belongs to the UPF0210 family. In terms of assembly, homodimer.

This Leuconostoc citreum (strain KM20) protein is UPF0210 protein LCK_00974.